The sequence spans 840 residues: Sorting nexin-25 (840 aa).

The PXA domain occupies 1-164 (MDRVLRDVFD…MLLRQLEYRE (164 aa)). Residues 287–401 (QFEDIMTNPF…LVSDLYEKLM (115 aa)) enclose the RGS domain. Positions 404 to 437 (EEEEEPDAQLASEKDELGSGGEAGEEAVEGTSGV) are disordered. Residues 446-494 (IKLRELNEKLEYKRQALSSIQNAPKPDKKIISKLKDEILLIEKECTALQ) adopt a coiled-coil conformation. The PX domain occupies 508–628 (GLWRASITSA…AFLSPSPDYL (121 aa)). Residue Ser-665 is modified to Phosphoserine.

It belongs to the sorting nexin family.

It is found in the endosome membrane. Functionally, may be involved in several stages of intracellular trafficking. This chain is Sorting nexin-25 (Snx25), found in Mus musculus (Mouse).